Reading from the N-terminus, the 354-residue chain is Guanine nucleotide-binding protein G(i) subunit alpha-1 (354 aa).

Gly-2 carries the N-myristoyl glycine lipid modification. Cys-3 is lipidated: S-palmitoyl cysteine. The region spanning 32 to 354 is the G-alpha domain; sequence REVKLLLLGA…KNNLKDCGLF (323 aa). The G1 motif stretch occupies residues 35–48; it reads KLLLLGAGESGKST. Residues 43–48, 150–151, and 175–178 contribute to the GTP site; these read ESGKST, DS, and LRTR. Ser-47 is a Mg(2+) binding site. The segment at 173–181 is G2 motif; that stretch reads DVLRTRVKT. Position 181 (Thr-181) interacts with Mg(2+). The segment at 196–205 is G3 motif; the sequence is FKMFDVGGQR. Residues 200–204, 269–272, and Ala-326 each bind GTP; these read DVGGQ and NKKD. Residues 265-272 form a G4 motif region; the sequence is ILFLNKKD. The tract at residues 324-329 is G5 motif; the sequence is TCATDT.

The protein belongs to the G-alpha family. G(i/o/t/z) subfamily. In terms of assembly, heterotrimeric G proteins are composed of 3 units; alpha, beta and gamma. The alpha chain contains the guanine nucleotide binding site. Part of a spindle orientation complex at least composed of GNAI1, GPSM2 and NUMA1. Identified in complex with the beta subunit GNB1 and the gamma subunit GNG1. Identified in complex with the beta subunit GNB1 and the gamma subunit GNG2. Component of the TAS2R14-GNAI1 complex, consisting of TAS2R14, GNAI1, GNB1 and GNG2; within the complex interacts with TAS2R14; this complex plays a role in the perception of bitterness. GTP binding causes dissociation of the heterotrimer, liberating the individual subunits so that they can interact with downstream effector proteins. Interacts (GDP-bound form) with GPSM1; this inhibits guanine nucleotide exchange and GTP binding. Interacts (GDP-bound form) with GPSM2 (via GoLoco domains); this inhibits guanine nucleotide exchange. Interacts with RGS10; this strongly enhances GTP hydrolysis. Interacts with RGS1 and RGS16; this strongly enhances GTPase activity. Interacts with RGS4. Interacts with RGS12. Interacts (via active GTP- or inactive GDP-bound forms) with RGS14 (via RGS and GoLoco domains). Interacts with RGS3, RGS6, RGS7, RGS8, RGS17, RGS18 and RGS20 (in vitro). Interacts (GDP-bound form) with RIC8A (via C-terminus); promoting GNAI1 folding and association with the plasma membrane. Interacts (inactive GDP-bound form) with NUCB1 (via GBA motif); the interaction leads to activation of GNAI1. Interacts (inactive GDP-bound form) with CCDC88C/DAPLE (via GBA motif); the interaction leads to activation of GNAI1. Interacts (inactive GDP-bound form) with CCDC8A/GIV (via GBA motif). Interacts with GPR15. Myristoylation at Gly-2 is required for membrane anchoring before palmitoylation. In terms of processing, palmitoylation at Cys-3 varies with membrane lipid composition.

It is found in the nucleus. Its subcellular location is the cytoplasm. It localises to the cell membrane. The protein resides in the cytoskeleton. The protein localises to the microtubule organizing center. It is found in the centrosome. Its subcellular location is the cell cortex. It localises to the membrane. Functionally, guanine nucleotide-binding proteins (G proteins) function as transducers downstream of G protein-coupled receptors (GPCRs) in numerous signaling cascades. The alpha chain contains the guanine nucleotide binding site and alternates between an active, GTP-bound state and an inactive, GDP-bound state. Signaling by an activated GPCR promotes GDP release and GTP binding. The alpha subunit has a low GTPase activity that converts bound GTP to GDP, thereby terminating the signal. Both GDP release and GTP hydrolysis are modulated by numerous regulatory proteins. Signaling is mediated via effector proteins, such as adenylate cyclase. Inhibits adenylate cyclase activity of ADCY1, ADCY5 and ADCY6, leading to decreased intracellular cAMP levels. The inactive GDP-bound form prevents the association of RGS14 with centrosomes and is required for the translocation of RGS14 from the cytoplasm to the plasma membrane. Required for normal cytokinesis during mitosis. Required for cortical dynein-dynactin complex recruitment during metaphase. This is Guanine nucleotide-binding protein G(i) subunit alpha-1 (GNAI1) from Pongo abelii (Sumatran orangutan).